Reading from the N-terminus, the 168-residue chain is Gastrula zinc finger protein XlCGF42.1 (168 aa).

6 consecutive C2H2-type zinc fingers follow at residues 6 to 28 (YSCS…RKSH), 34 to 56 (FCCS…YRTH), 62 to 84 (CICS…QKYH), 90 to 112 (FSCS…LRIH), 118 to 140 (YTCT…LRIH), and 146 to 165 (FTCS…DRHH).

This sequence belongs to the krueppel C2H2-type zinc-finger protein family.

The protein resides in the nucleus. Functionally, may be involved in transcriptional regulation. This is Gastrula zinc finger protein XlCGF42.1 from Xenopus laevis (African clawed frog).